Consider the following 375-residue polypeptide: 23S rRNA (uracil(747)-C(5))-methyltransferase RlmC (375 aa).

4 residues coordinate [4Fe-4S] cluster: C3, C11, C14, and C87. Residues Q212, F241, E262, and N307 each contribute to the S-adenosyl-L-methionine site. C334 acts as the Nucleophile in catalysis.

The protein belongs to the class I-like SAM-binding methyltransferase superfamily. RNA M5U methyltransferase family. RlmC subfamily.

It carries out the reaction uridine(747) in 23S rRNA + S-adenosyl-L-methionine = 5-methyluridine(747) in 23S rRNA + S-adenosyl-L-homocysteine + H(+). Functionally, catalyzes the formation of 5-methyl-uridine at position 747 (m5U747) in 23S rRNA. The polypeptide is 23S rRNA (uracil(747)-C(5))-methyltransferase RlmC (Salmonella agona (strain SL483)).